Here is a 361-residue protein sequence, read N- to C-terminus: tRNA-specific 2-thiouridylase MnmA (361 aa).

ATP-binding positions include 8–15 (AMSGGVDS) and methionine 34. The Nucleophile role is filled by cysteine 104. Cysteines 104 and 202 form a disulfide. Glycine 128 is a binding site for ATP. The interaction with tRNA stretch occupies residues 152-154 (KDQ). Residue cysteine 202 is the Cysteine persulfide intermediate of the active site. Residues 307-308 (RY) are interaction with tRNA.

It belongs to the MnmA/TRMU family.

It is found in the cytoplasm. It carries out the reaction S-sulfanyl-L-cysteinyl-[protein] + uridine(34) in tRNA + AH2 + ATP = 2-thiouridine(34) in tRNA + L-cysteinyl-[protein] + A + AMP + diphosphate + H(+). Its function is as follows. Catalyzes the 2-thiolation of uridine at the wobble position (U34) of tRNA, leading to the formation of s(2)U34. The sequence is that of tRNA-specific 2-thiouridylase MnmA from Caldicellulosiruptor saccharolyticus (strain ATCC 43494 / DSM 8903 / Tp8T 6331).